The following is a 212-amino-acid chain: Thiamine-phosphate synthase (212 aa).

Residues 41 to 45 (QYREK) and D76 each bind 4-amino-2-methyl-5-(diphosphooxymethyl)pyrimidine. Mg(2+)-binding residues include D77 and D96. S114 serves as a coordination point for 4-amino-2-methyl-5-(diphosphooxymethyl)pyrimidine. 141 to 143 (TTS) lines the 2-[(2R,5Z)-2-carboxy-4-methylthiazol-5(2H)-ylidene]ethyl phosphate pocket. K144 contributes to the 4-amino-2-methyl-5-(diphosphooxymethyl)pyrimidine binding site. Residues G172 and 192-193 (IS) contribute to the 2-[(2R,5Z)-2-carboxy-4-methylthiazol-5(2H)-ylidene]ethyl phosphate site.

It belongs to the thiamine-phosphate synthase family. It depends on Mg(2+) as a cofactor.

The enzyme catalyses 2-[(2R,5Z)-2-carboxy-4-methylthiazol-5(2H)-ylidene]ethyl phosphate + 4-amino-2-methyl-5-(diphosphooxymethyl)pyrimidine + 2 H(+) = thiamine phosphate + CO2 + diphosphate. It carries out the reaction 2-(2-carboxy-4-methylthiazol-5-yl)ethyl phosphate + 4-amino-2-methyl-5-(diphosphooxymethyl)pyrimidine + 2 H(+) = thiamine phosphate + CO2 + diphosphate. The catalysed reaction is 4-methyl-5-(2-phosphooxyethyl)-thiazole + 4-amino-2-methyl-5-(diphosphooxymethyl)pyrimidine + H(+) = thiamine phosphate + diphosphate. It participates in cofactor biosynthesis; thiamine diphosphate biosynthesis; thiamine phosphate from 4-amino-2-methyl-5-diphosphomethylpyrimidine and 4-methyl-5-(2-phosphoethyl)-thiazole: step 1/1. Its function is as follows. Condenses 4-methyl-5-(beta-hydroxyethyl)thiazole monophosphate (THZ-P) and 2-methyl-4-amino-5-hydroxymethyl pyrimidine pyrophosphate (HMP-PP) to form thiamine monophosphate (TMP). The polypeptide is Thiamine-phosphate synthase (Leuconostoc citreum (strain KM20)).